The following is a 210-amino-acid chain: Imidazoleglycerol-phosphate dehydratase (210 aa).

This sequence belongs to the imidazoleglycerol-phosphate dehydratase family.

Its subcellular location is the cytoplasm. It catalyses the reaction D-erythro-1-(imidazol-4-yl)glycerol 3-phosphate = 3-(imidazol-4-yl)-2-oxopropyl phosphate + H2O. Its pathway is amino-acid biosynthesis; L-histidine biosynthesis; L-histidine from 5-phospho-alpha-D-ribose 1-diphosphate: step 6/9. This chain is Imidazoleglycerol-phosphate dehydratase, found in Mycobacterium bovis (strain ATCC BAA-935 / AF2122/97).